We begin with the raw amino-acid sequence, 863 residues long: Transforming growth factor-beta receptor-associated protein 1 homolog (863 aa).

The CNH domain occupies 23–297; the sequence is RINIECIECC…QLLQDFEGKV (275 aa). The stretch at 564–729 is one CHCR repeat; the sequence is RPTSEERRGQ…LLSVYLDPDV (166 aa).

This sequence belongs to the TRAP1 family. In terms of assembly, component of the putative class C core vacuole/endosome tethering (CORVET) complex.

The protein resides in the cytoplasm. It localises to the early endosome. Plays a role in the TGF-beta signaling pathway. Functionally, plays a role in vesicle-mediated protein trafficking of the endocytic membrane transport pathway. Believed to act as a component of the putative CORVET endosomal tethering complexes which is proposed to be involved in the Rab5-to-Rab7 endosome conversion probably implicating MON1A/B, and via binding SNAREs and SNARE complexes to mediate tethering and docking events during SNARE-mediated membrane fusion. The CORVET complex is proposed to function as a Rab5 effector to mediate early endosome fusion probably in specific endosome subpopulations. The chain is Transforming growth factor-beta receptor-associated protein 1 homolog (tgfbrap1) from Danio rerio (Zebrafish).